Reading from the N-terminus, the 301-residue chain is tRNA dimethylallyltransferase (301 aa).

Residue 9–16 (GPTASGKS) coordinates ATP. 11–16 (TASGKS) is a binding site for substrate. Residues 34–37 (DSMQ) form an interaction with substrate tRNA region.

It belongs to the IPP transferase family. In terms of assembly, monomer. It depends on Mg(2+) as a cofactor.

It catalyses the reaction adenosine(37) in tRNA + dimethylallyl diphosphate = N(6)-dimethylallyladenosine(37) in tRNA + diphosphate. Catalyzes the transfer of a dimethylallyl group onto the adenine at position 37 in tRNAs that read codons beginning with uridine, leading to the formation of N6-(dimethylallyl)adenosine (i(6)A). The polypeptide is tRNA dimethylallyltransferase (Corynebacterium glutamicum (strain R)).